A 68-amino-acid polypeptide reads, in one-letter code: Stage III sporulation protein AC (68 aa).

2 helical membrane passes run 5 to 25 and 33 to 53; these read VNVIFQIAGVGIVVAFLHTIL and YAQWVTLLGFIYILFMVATIV.

The protein resides in the cell membrane. This chain is Stage III sporulation protein AC (spoIIIAC), found in Bacillus subtilis (strain 168).